A 209-amino-acid polypeptide reads, in one-letter code: Casparian strip membrane protein 1 (209 aa).

Topologically, residues 1 to 46 (MSSGANATTIDVPETRAEAKGKAPLIAAPIVATTKATPHPNAGWKK) are cytoplasmic. Residues 47 to 67 (GLAIFDFLLRLAAIAATLAAA) form a helical membrane-spanning segment. Residues 68 to 95 (TTMGTTDETLPFFTQFFQFQASFDDLPA) lie on the Extracellular side of the membrane. Residues 96-116 (FMFFVVATAIASGYLALSLPF) form a helical membrane-spanning segment. Residues 117–137 (SLVSIFRPHAQGIRLLLIISD) are Cytoplasmic-facing. The chain crosses the membrane as a helical span at residues 138–158 (TVMLALTTAGAASATAIVYLA). Topologically, residues 159–183 (HNGDSSANWIAICQQFTDFCQSVSG) are extracellular. The helical transmembrane segment at 184-204 (AVVASFIAVVIFMLLVMMSAL) threads the bilayer. Residues 205–209 (ALRKH) are Cytoplasmic-facing.

The protein belongs to the Casparian strip membrane proteins (CASP) family. As to quaternary structure, homodimer and heterodimers.

The protein localises to the cell membrane. Its function is as follows. Regulates membrane-cell wall junctions and localized cell wall deposition. Required for establishment of the Casparian strip membrane domain (CSD) and the subsequent formation of Casparian strips, a cell wall modification of the root endodermis that determines an apoplastic barrier between the intraorganismal apoplasm and the extraorganismal apoplasm and prevents lateral diffusion. The polypeptide is Casparian strip membrane protein 1 (Vitis vinifera (Grape)).